The sequence spans 262 residues: MSQLQEMMTVVSQREAAYNIFEMVLKGTLVDEMDLPGQFLHLAVSNGAMLLRRPISISSWDKRAKTCTILYRIGDETTGTYELSKLEPGAKVDIMGPLGNGFPVAEVTSTDKILIIGGGIGVPPLYELAKQLEKTGCQMTILLGFASENVKILENEFSNLKNVTLKIATDDGSYGTKGHVGMLMNEIDFEADALYTCGAPAMLKAVAKKYDQLERLYISMESRMACGIGACYACVEHDKEDESHALKVCEDGPVFLGKQLSL.

The FAD-binding FR-type domain maps to 3 to 104 (QLQEMMTVVS…MGPLGNGFPV (102 aa)). FAD is bound by residues 53–56 (RPIS), 70–72 (LYR), and 79–80 (GT). Cys-226, Cys-231, Cys-234, and Cys-249 together coordinate [2Fe-2S] cluster.

The protein belongs to the PyrK family. Heterotetramer of 2 PyrK and 2 PyrD type B subunits. [2Fe-2S] cluster is required as a cofactor. Requires FAD as cofactor.

It participates in pyrimidine metabolism; UMP biosynthesis via de novo pathway; orotate from (S)-dihydroorotate (NAD(+) route): step 1/1. In terms of biological role, responsible for channeling the electrons from the oxidation of dihydroorotate from the FMN redox center in the PyrD type B subunit to the ultimate electron acceptor NAD(+). In Lactococcus lactis subsp. cremoris (strain SK11), this protein is Dihydroorotate dehydrogenase B (NAD(+)), electron transfer subunit.